The chain runs to 197 residues: 3-isopropylmalate dehydratase small subunit (197 aa).

It belongs to the LeuD family. LeuD type 1 subfamily. In terms of assembly, heterodimer of LeuC and LeuD.

It carries out the reaction (2R,3S)-3-isopropylmalate = (2S)-2-isopropylmalate. Its pathway is amino-acid biosynthesis; L-leucine biosynthesis; L-leucine from 3-methyl-2-oxobutanoate: step 2/4. Catalyzes the isomerization between 2-isopropylmalate and 3-isopropylmalate, via the formation of 2-isopropylmaleate. The sequence is that of 3-isopropylmalate dehydratase small subunit from Shouchella clausii (strain KSM-K16) (Alkalihalobacillus clausii).